Here is an 890-residue protein sequence, read N- to C-terminus: Inter-alpha-trypsin inhibitor heavy chain H3 (890 aa).

An N-terminal signal peptide occupies residues 1 to 20 (MAFAWWPCLILALLSSLAAS). Positions 21 to 34 (GFPRSPFRLLGKRS) are excised as a propeptide. In terms of domain architecture, VIT spans 29–158 (LLGKRSLPEG…KVTFELTYEE (130 aa)). N-linked (GlcNAc...) asparagine glycosylation occurs at asparagine 91. Residues 284–467 (NVAFVIDISG…LQLQGFYEEV (184 aa)) form the VWFA domain. The N-linked (GlcNAc...) asparagine glycan is linked to asparagine 580. Aspartate 1-(chondroitin 4-sulfate)-ester is present on aspartate 651. Residues 652–890 (PHFIIQIPEK…HTDYIVPNLF (239 aa)) constitute a propeptide that is removed on maturation.

It belongs to the ITIH family. In terms of assembly, I-alpha-I plasma protease inhibitors are assembled from one or two heavy chains (HC) and one light chain, bikunin. Pre-alpha-inhibitor (P-alpha-I) is composed of ITIH3/HC3 and bikunin. In terms of processing, heavy chains are linked to bikunin via chondroitin 4-sulfate esterified to the alpha-carboxyl of the C-terminal aspartate after propeptide cleavage.

Its subcellular location is the secreted. In terms of biological role, may act as a carrier of hyaluronan in serum or as a binding protein between hyaluronan and other matrix protein, including those on cell surfaces in tissues to regulate the localization, synthesis and degradation of hyaluronan which are essential to cells undergoing biological processes. The polypeptide is Inter-alpha-trypsin inhibitor heavy chain H3 (ITIH3) (Homo sapiens (Human)).